The sequence spans 466 residues: Heat stress transcription factor A-5 (466 aa).

A DNA-binding region spans residues 21–115 (PAPFLVKTYE…LLKNIHRRKP (95 aa)). The interval 125-191 (SSTDQERAVL…KLLNFLETAI (67 aa)) is hydrophobic repeat HR-A/B. The Bipartite nuclear localization signal signature appears at 198–217 (KNFGKKVEQLDISAYNKKRR). 3 disordered regions span residues 215–248 (KRRL…GNIF), 272–300 (HSIQ…LTKR), and 422–466 (TERP…QLTL). Over residues 218-233 (LPEVEQSKPPSEDSHL) the composition is skewed to basic and acidic residues. An AHA motif is present at residues 414-423 (DVFWEQFLTE). Composition is skewed to polar residues over residues 425–438 (PGSS…STYR) and 455–466 (LRNTKNIEQLTL). The Nuclear export signal motif lies at 461 to 466 (IEQLTL).

The protein belongs to the HSF family. Class A subfamily. Homotrimer. Exhibits temperature-dependent phosphorylation.

Its subcellular location is the cytoplasm. The protein localises to the nucleus. In terms of biological role, transcriptional activator that specifically binds DNA sequence 5'-AGAAnnTTCT-3' known as heat shock promoter elements (HSE). The polypeptide is Heat stress transcription factor A-5 (HSFA5) (Arabidopsis thaliana (Mouse-ear cress)).